We begin with the raw amino-acid sequence, 492 residues long: Putative BTB/POZ domain and WD-repeat protein R786 (492 aa).

Residues 16-86 form the BTB domain; it reads TDVEIVLIDE…FYGQIVDSTN (71 aa). 2 WD repeats span residues 241–281 and 286–325; these read QSSC…IKIK and LINR…SKGI.

The protein belongs to the mimivirus BTB/WD family.

The chain is Putative BTB/POZ domain and WD-repeat protein R786 from Acanthamoeba polyphaga (Amoeba).